Reading from the N-terminus, the 449-residue chain is Ras-related GTP-binding protein D (449 aa).

The disordered stretch occupies residues 1-55 (MSQVLGKPQPQGEDGGEDQEEDELVGLAGYEDGPESSDAELDSGPEEGESRRNSW). Acidic residues-rich tracts occupy residues 14–24 (DGGEDQEEDEL) and 32–47 (DGPE…GPEE). The GTP site is built by R120, R121, S122, G123, K124, S125, S126, and T140. Residues R121, S122, G123, K124, S125, S126, T140, E144, and T146 each contribute to the GDP site. GTP contacts are provided by T146, G169, H228, K229, and D231. GDP is bound by residues H228, K229, D231, S269, and I270. I270 contacts GTP. Residues 428–449 (KAQSRLPKKTGATPNGTPRVLL) form a disordered region.

The protein belongs to the GTR/RAG GTP-binding protein family. Forms a heterodimer with RRAGA in a sequence-independent manner and RRAGB. Heterodimerization stabilizes RRAG proteins. The GDP-bound form of RRAGD (in complex with the GTP-bound form of RRAGA or RRAGB), interacts with RPTOR, thereby promoting recruitment of mTORC1 to the lysosomes. Component of the lysosomal folliculin complex (LFC), composed of FLCN, FNIP1 (or FNIP2), RagA/RRAGA or RagB/RRAGB GDP-bound, RagC/RRAGC or RagD/RRAGD GTP-bound, and Ragulator. Interacts with NOL8. Interacts with SH3BP4; the interaction with this negative regulator is most probably direct, preferentially occurs with the inactive GDP-bound form of RRAGD and is negatively regulated by amino acids. The Rag heterodimer interacts with SLC38A9; the probable amino acid sensor. Interacts with SESN1, SESN2 and SESN3. The GDP-bound form interacts with TFEB. The GDP-bound form interacts with TFE3. In terms of tissue distribution, expressed in the distal tubule of the kidney.

It is found in the cytoplasm. The protein localises to the nucleus. Its subcellular location is the lysosome membrane. It catalyses the reaction GTP + H2O = GDP + phosphate + H(+). With respect to regulation, the activation of RagD/RRAGD is mediated by a GTPase activating protein (GAP). In high-amino acid conditions, activated by GTPase activating protein FLCN that stimulates RRAGD GTPase activity to turn it into its active GDP-bound form. In response to amino acid depletion, the GATOR1 complex inactivates RagC/RRAGC by securing the GTP-bound inactive form. Its function is as follows. Guanine nucleotide-binding protein that plays a crucial role in the cellular response to amino acid availability through regulation of the mTORC1 signaling cascade. Forms heterodimeric Rag complexes with RagA/RRAGA or RagB/RRAGB and cycles between an inactive GTP-bound and an active GDP-bound form: RagD/RRAGD is in its active form when GDP-bound RagD/RRAGD forms a complex with GTP-bound RagA/RRAGA (or RagB/RRAGB) and in an inactive form when GTP-bound RagD/RRAGD heterodimerizes with GDP-bound RagA/RRAGA (or RagB/RRAGB). In its active form, promotes the recruitment of mTORC1 to the lysosomes and its subsequent activation by the GTPase RHEB. This is a crucial step in the activation of the MTOR signaling cascade by amino acids. Also plays a central role in the non-canonical mTORC1 complex, which acts independently of RHEB and specifically mediates phosphorylation of MiT/TFE factors TFEB and TFE3: GDP-bound RagD/RRAGD mediates recruitment of MiT/TFE factors TFEB and TFE3. This chain is Ras-related GTP-binding protein D, found in Mus musculus (Mouse).